Reading from the N-terminus, the 76-residue chain is Candidate secreted effector protein MPL124497 (76 aa).

Residues 1 to 21 form the signal peptide; that stretch reads MKLIIFAAISVAFMSFDQVLG.

It belongs to the CPGH1 family.

The protein localises to the secreted. It is found in the host cell. Its subcellular location is the host cytoplasm. It localises to the host nucleus. Functionally, rust effector delivered into infected tissues to modulate host functions and contribute to pathogen virulence. Enhances leaf colonization by the bacteria Pseudomonas syringae and the oomycete Hyaloperonospora arabidopsidis pathogens in an Arabidopsis thaliana infection model. The sequence is that of Candidate secreted effector protein MPL124497 from Melampsora larici-populina (strain 98AG31 / pathotype 3-4-7) (Poplar leaf rust fungus).